The chain runs to 228 residues: DNA-binding response regulator MtrA (228 aa).

The Response regulatory domain occupies Arg7–Leu120. At Asp56 the chain carries 4-aspartylphosphate. A DNA-binding region (ompR/PhoB-type) is located at residues Ala128 to Pro227.

Probably a monomer when inactive, phosphorylation may permit it to oligomerize. The monomeric form does not seem to be phosphorylated. Post-translationally, phosphorylated by MtrB.

The protein resides in the cytoplasm. Its function is as follows. Member of the two-component regulatory system MtrA/MtrB, responding to environmental signals. Controls expression of a number of genes including dnaA, ripA, fbpB and probably itself. Probably plays a role in cell division. The sequence is that of DNA-binding response regulator MtrA (mtrA) from Mycolicibacterium smegmatis (strain ATCC 700084 / mc(2)155) (Mycobacterium smegmatis).